Reading from the N-terminus, the 450-residue chain is Phosphoglucosamine mutase (450 aa).

S101 serves as the catalytic Phosphoserine intermediate. The Mg(2+) site is built by S101, D240, D242, and D244. S101 is modified (phosphoserine).

The protein belongs to the phosphohexose mutase family. The cofactor is Mg(2+). Post-translationally, activated by phosphorylation.

It carries out the reaction alpha-D-glucosamine 1-phosphate = D-glucosamine 6-phosphate. Catalyzes the conversion of glucosamine-6-phosphate to glucosamine-1-phosphate. This chain is Phosphoglucosamine mutase, found in Streptococcus equi subsp. zooepidemicus (strain MGCS10565).